The sequence spans 626 residues: Elongation factor 4 (626 aa).

The tr-type G domain occupies 14–195 (SLIRNFCIIA…RIVVDVPAPT (182 aa)). GTP contacts are provided by residues 26-31 (DHGKST) and 142-145 (NKID). The interval 603-626 (LSTGEGGNDRDTKDKIRAAQKSEG) is disordered. Residues 609–626 (GNDRDTKDKIRAAQKSEG) are compositionally biased toward basic and acidic residues.

It belongs to the TRAFAC class translation factor GTPase superfamily. Classic translation factor GTPase family. LepA subfamily.

It localises to the cell membrane. The catalysed reaction is GTP + H2O = GDP + phosphate + H(+). Its function is as follows. Required for accurate and efficient protein synthesis under certain stress conditions. May act as a fidelity factor of the translation reaction, by catalyzing a one-codon backward translocation of tRNAs on improperly translocated ribosomes. Back-translocation proceeds from a post-translocation (POST) complex to a pre-translocation (PRE) complex, thus giving elongation factor G a second chance to translocate the tRNAs correctly. Binds to ribosomes in a GTP-dependent manner. In Bifidobacterium animalis subsp. lactis (strain AD011), this protein is Elongation factor 4.